Here is a 688-residue protein sequence, read N- to C-terminus: Elongation factor G (688 aa).

Positions 8 to 282 constitute a tr-type G domain; that stretch reads DKFRNFGIMA…GVVDYLPSPL (275 aa). Residues 17–24, 81–85, and 135–138 contribute to the GTP site; these read AHIDAGKT, DTPGH, and NKMD.

The protein belongs to the TRAFAC class translation factor GTPase superfamily. Classic translation factor GTPase family. EF-G/EF-2 subfamily.

Its subcellular location is the cytoplasm. Catalyzes the GTP-dependent ribosomal translocation step during translation elongation. During this step, the ribosome changes from the pre-translocational (PRE) to the post-translocational (POST) state as the newly formed A-site-bound peptidyl-tRNA and P-site-bound deacylated tRNA move to the P and E sites, respectively. Catalyzes the coordinated movement of the two tRNA molecules, the mRNA and conformational changes in the ribosome. The chain is Elongation factor G from Clostridium botulinum (strain Eklund 17B / Type B).